The sequence spans 132 residues: Interleukin-5 (132 aa).

The first 17 residues, 1–17, serve as a signal peptide directing secretion; the sequence is MRLPLQLSILTLAWVWA. 3 N-linked (GlcNAc...) asparagine glycosylation sites follow: asparagine 45, asparagine 74, and asparagine 88.

This sequence belongs to the IL-5 family. Homodimer; disulfide-linked. Interacts with IL5RA. Interacts with CSF2RB.

It is found in the secreted. In terms of biological role, homodimeric cytokine expressed predominantly by T-lymphocytes and NK cells that plays an important role in the survival, differentiation, and chemotaxis of eosinophils. Also acts on activated and resting B-cells to induce immunoglobulin production, growth, and differentiation. Mechanistically, exerts its biological effects through a receptor composed of IL5RA subunit and the cytokine receptor common subunit beta/CSF2RB. Binding to the receptor leads to activation of various kinases including LYN, SYK and JAK2 and thereby propagates signals through the RAS-MAPK and JAK-STAT5 pathways respectively. The protein is Interleukin-5 (IL5) of Meriones unguiculatus (Mongolian jird).